We begin with the raw amino-acid sequence, 639 residues long: UPF0313 protein CLJ_B0249 (639 aa).

The Radical SAM core domain occupies 295 to 566 (AIKEVKFSIT…RMQRSLLQFS (272 aa)). Positions 309, 313, and 316 each coordinate [4Fe-4S] cluster. Residues 597–639 (YNKPYKKSHKKNNAKNKNNNYNKNKDVSKKNKKNSLSKHKKRK) form a disordered region. 2 stretches are compositionally biased toward basic residues: residues 600–610 (PYKKSHKKNNA) and 626–639 (KNKK…KKRK).

It belongs to the UPF0313 family. The cofactor is [4Fe-4S] cluster.

The polypeptide is UPF0313 protein CLJ_B0249 (Clostridium botulinum (strain 657 / Type Ba4)).